The following is a 460-amino-acid chain: Arginine decarboxylase (460 aa).

The residue at position 226 (lysine 226) is an N6-(pyridoxal phosphate)lysine.

The protein belongs to the Orn/Lys/Arg decarboxylase class-I family. Requires pyridoxal 5'-phosphate as cofactor.

It is found in the cytoplasm. It carries out the reaction L-arginine + H(+) = agmatine + CO2. It participates in amine and polyamine biosynthesis; agmatine biosynthesis; agmatine from L-arginine: step 1/1. In terms of biological role, catalyzes the formation of agmatine from arginine. This is Arginine decarboxylase (speA) from Bacillus cereus (strain ATCC 14579 / DSM 31 / CCUG 7414 / JCM 2152 / NBRC 15305 / NCIMB 9373 / NCTC 2599 / NRRL B-3711).